A 164-amino-acid chain; its full sequence is Large ribosomal subunit protein uL10 (164 aa).

The protein belongs to the universal ribosomal protein uL10 family. Part of the ribosomal stalk of the 50S ribosomal subunit. The N-terminus interacts with L11 and the large rRNA to form the base of the stalk. The C-terminus forms an elongated spine to which L12 dimers bind in a sequential fashion forming a multimeric L10(L12)X complex.

Forms part of the ribosomal stalk, playing a central role in the interaction of the ribosome with GTP-bound translation factors. The polypeptide is Large ribosomal subunit protein uL10 (Photobacterium profundum (strain SS9)).